Here is a 701-residue protein sequence, read N- to C-terminus: MAQKDVLTDLTKVRNIGIMAHIDAGKTTTTERILYYTGISYKIGEVHDGAATMDWMEQEQERGITITSAATTCFWNDNQINIIDTPGHVDFTVEVERSLRVLDGAVAVFDGKEGVEPQSEQVWRQADKYDVPRICFVNKMDKIGADFYFSVRTMEERLGANVIPIQIPVGSEGDFEGVVDLVEMKAKVWSAEAKLGEKYDVVDIPADLQEKAEEYRTKLLEAVAETDEALLDKYLGGEELTIEEIKGAIRKLTISSEAYPVLCGSAFKNKGVQPMLDAVIDYLPSPLDVPPAEGHVPGKEEELITRKPSTDEPFSALAFKVATHPFFGKLTYVRVYSGKVDSGSQVINSTKGKKERLGKLFQMHSNKENPVETASAGHIYAVIGLKDTTTGDTLSDPNHQIVLESMTFPDPVIEVAIEPKTKSDQEKLSLSIQKLAEEDPTFKVHLDQETGQTVIGGMGELHLDILVDRMRREFKVEANVGKPQVAYKETIRRKVENVEYTHKKQTGGSGQFAKVIINLEPFTGEDGATYEFENKVTGGRIPREYIPSVDAGAQDAMQYGVLAGYPLVNLKVTLLDGAFHEVDSSEMAFKIAGSQVLKKAAAQAQPVILEPIMAVEVTTPEDYMGDVIGDLNSRRGQIQAMEERSGARVVKAHVPLSEMFGYVGDLRSKTQGRANYSMVFDSYAEVPANVSKEIIAKATGQ.

The tr-type G domain occupies 11 to 287 (TKVRNIGIMA…AVIDYLPSPL (277 aa)). Residues 20 to 27 (AHIDAGKT), 84 to 88 (DTPGH), and 138 to 141 (NKMD) each bind GTP.

This sequence belongs to the TRAFAC class translation factor GTPase superfamily. Classic translation factor GTPase family. EF-G/EF-2 subfamily.

It localises to the cytoplasm. Its function is as follows. Catalyzes the GTP-dependent ribosomal translocation step during translation elongation. During this step, the ribosome changes from the pre-translocational (PRE) to the post-translocational (POST) state as the newly formed A-site-bound peptidyl-tRNA and P-site-bound deacylated tRNA move to the P and E sites, respectively. Catalyzes the coordinated movement of the two tRNA molecules, the mRNA and conformational changes in the ribosome. In Mycobacterium avium (strain 104), this protein is Elongation factor G.